Reading from the N-terminus, the 1395-residue chain is Little elongation complex subunit 1 (1395 aa).

Disordered regions lie at residues isoleucine 175–lysine 212, glycine 452–isoleucine 496, glutamate 561–asparagine 588, asparagine 658–serine 680, proline 707–glycine 786, isoleucine 841–glutamate 872, and alanine 908–histidine 936. The segment covering lysine 478–alanine 489 has biased composition (basic residues). A compositionally biased stretch (acidic residues) spans serine 710–glutamate 720. Residues glutamate 721–asparagine 731 show a composition bias toward basic and acidic residues. Acidic residues predominate over residues serine 745–glutamate 762. Positions aspartate 748–aspartate 778 form a coiled coil. The span at alanine 763 to serine 776 shows a compositional bias: basic and acidic residues. The segment covering glutamate 913–histidine 936 has biased composition (basic and acidic residues).

The protein belongs to the ICE1 family. As to quaternary structure, component of the little elongation complex (LEC), at least composed of Ell, Eaf, Ice1 and Ice2.

It is found in the nucleus. Functionally, component of the little elongation complex (LEC), a complex required to regulate small nuclear RNA (snRNA) gene transcription by RNA polymerase II and III. Specifically acts as a scaffold protein that promotes the LEC complex formation and recruitment and RNA polymerase II occupancy at snRNA genes in subnuclear bodies. This chain is Little elongation complex subunit 1 (Ice1), found in Drosophila melanogaster (Fruit fly).